The following is a 157-amino-acid chain: 3-dehydroquinate dehydratase (157 aa).

Tyr24 acts as the Proton acceptor in catalysis. Positions 75, 81, and 88 each coordinate substrate. Residue His101 is the Proton donor of the active site. Substrate contacts are provided by residues 102 to 103 and Arg112; that span reads LS.

Belongs to the type-II 3-dehydroquinase family. Homododecamer.

It catalyses the reaction 3-dehydroquinate = 3-dehydroshikimate + H2O. It functions in the pathway metabolic intermediate biosynthesis; chorismate biosynthesis; chorismate from D-erythrose 4-phosphate and phosphoenolpyruvate: step 3/7. Its function is as follows. Catalyzes a trans-dehydration via an enolate intermediate. This is 3-dehydroquinate dehydratase from Brucella melitensis biotype 1 (strain ATCC 23456 / CCUG 17765 / NCTC 10094 / 16M).